The primary structure comprises 74 residues: Protein RALF-like 25 (74 aa).

The first 22 residues, 1–22 (MKTFMIILLVICSILIVGRVEA), serve as a signal peptide directing secretion. Intrachain disulfides connect C35/C44 and C62/C68.

The protein belongs to the plant rapid alkalinization factor (RALF) family.

It localises to the secreted. Cell signaling peptide that may regulate plant stress, growth, and development. Mediates a rapid alkalinization of extracellular space by mediating a transient increase in the cytoplasmic Ca(2+) concentration leading to a calcium-dependent signaling events through a cell surface receptor and a concomitant activation of some intracellular mitogen-activated protein kinases. The sequence is that of Protein RALF-like 25 (RALFL25) from Arabidopsis thaliana (Mouse-ear cress).